The chain runs to 386 residues: Phosphoglycerate kinase (386 aa).

Substrate is bound by residues 21–23, Arg36, 59–62, Arg113, and Arg146; these read DLN and HLGR. Residues Lys197, Glu314, and 340–343 each bind ATP; that span reads GGDT.

The protein belongs to the phosphoglycerate kinase family. As to quaternary structure, monomer.

It is found in the cytoplasm. The enzyme catalyses (2R)-3-phosphoglycerate + ATP = (2R)-3-phospho-glyceroyl phosphate + ADP. It functions in the pathway carbohydrate degradation; glycolysis; pyruvate from D-glyceraldehyde 3-phosphate: step 2/5. In Vibrio vulnificus (strain CMCP6), this protein is Phosphoglycerate kinase.